Consider the following 349-residue polypeptide: Histidinol-phosphate aminotransferase (349 aa).

Residues 1–22 are disordered; sequence MVSIRPSVRHTPAYVPGEQPQT. Lysine 207 carries the post-translational modification N6-(pyridoxal phosphate)lysine.

It belongs to the class-II pyridoxal-phosphate-dependent aminotransferase family. Histidinol-phosphate aminotransferase subfamily. As to quaternary structure, homodimer. Pyridoxal 5'-phosphate serves as cofactor.

It catalyses the reaction L-histidinol phosphate + 2-oxoglutarate = 3-(imidazol-4-yl)-2-oxopropyl phosphate + L-glutamate. Its pathway is amino-acid biosynthesis; L-histidine biosynthesis; L-histidine from 5-phospho-alpha-D-ribose 1-diphosphate: step 7/9. This is Histidinol-phosphate aminotransferase (hisC) from Synechocystis sp. (strain ATCC 27184 / PCC 6803 / Kazusa).